The chain runs to 203 residues: Twist-related protein 1 (203 aa).

A compositionally biased stretch (low complexity) spans 1 to 18 (MMQDVSSSPVSPADDSLS). Residues 1–105 (MMQDVSSSPV…SGGGSPQSYE (105 aa)) form a disordered region. The span at 34-43 (RGGRKRRSSR) shows a compositional bias: basic residues. Composition is skewed to gly residues over residues 46 to 65 (AGGGAGPGGAAGGGVGGGDE) and 80 to 100 (GCGGGGGSAGGGGGSSSGGGS). A bHLH domain is found at 109–160 (TQRVMANVRGRQRTQSLNEAFAALRKIIPTLPSDKLSKIQTLKLAARYIDFL). The tract at residues 162–192 (QVLQSDELDSKMASCSYVAHERLSYAFSVWR) is sufficient for transactivation activity.

In terms of assembly, efficient DNA binding requires dimerization with another bHLH protein. Homodimer or heterodimer with E proteins such as TCF3. ID1 binds preferentially to TCF3 but does not interact efficiently with TWIST1 so ID1 levels control the amount of TCF3 available to dimerize with TWIST and thus determine the type of dimer formed.

Its subcellular location is the nucleus. Its function is as follows. Acts as a transcriptional regulator. Inhibits myogenesis by sequestrating E proteins, inhibiting trans-activation by MEF2, and inhibiting DNA-binding by MYOD1 through physical interaction. This interaction probably involves the basic domains of both proteins. Also represses expression of pro-inflammatory cytokines such as TNFA and IL1B. Regulates cranial suture patterning and fusion. Activates transcription as a heterodimer with E proteins. Regulates gene expression differentially, depending on dimer composition. Homodimers induce expression of FGFR2 and POSTN while heterodimers repress FGFR2 and POSTN expression and induce THBS1 expression. Heterodimerization is also required for osteoblast differentiation. Represses the activity of the circadian transcriptional activator: NPAS2-BMAL1 heterodimer. In Callithrix jacchus (White-tufted-ear marmoset), this protein is Twist-related protein 1 (TWIST1).